Here is a 230-residue protein sequence, read N- to C-terminus: Small ribosomal subunit protein uS3c (230 aa).

Residues 39 to 109 enclose the KH type-2 domain; it reads IRSFIHSKLS…QLRVNVVEIA (71 aa).

The protein belongs to the universal ribosomal protein uS3 family. In terms of assembly, part of the 30S ribosomal subunit.

The protein resides in the plastid. It localises to the chloroplast. The chain is Small ribosomal subunit protein uS3c (rps3) from Pyropia yezoensis (Susabi-nori).